A 152-amino-acid polypeptide reads, in one-letter code: Peptide deformylase (152 aa).

Cysteine 91 and histidine 133 together coordinate Fe cation. Glutamate 134 is a catalytic residue. Residue histidine 137 participates in Fe cation binding.

This sequence belongs to the polypeptide deformylase family. It depends on Fe(2+) as a cofactor.

It catalyses the reaction N-terminal N-formyl-L-methionyl-[peptide] + H2O = N-terminal L-methionyl-[peptide] + formate. In terms of biological role, removes the formyl group from the N-terminal Met of newly synthesized proteins. Requires at least a dipeptide for an efficient rate of reaction. N-terminal L-methionine is a prerequisite for activity but the enzyme has broad specificity at other positions. This chain is Peptide deformylase, found in Wigglesworthia glossinidia brevipalpis.